Consider the following 278-residue polypeptide: Polyamine aminopropyltransferase (278 aa).

The region spanning 5-238 (ELWFTEQQTP…GLWSFTLGSK (234 aa)) is the PABS domain. Residue Q34 coordinates S-methyl-5'-thioadenosine. 2 residues coordinate spermidine: H65 and D89. Residues E109 and 140 to 141 (DG) contribute to the S-methyl-5'-thioadenosine site. Catalysis depends on D158, which acts as the Proton acceptor. 158–161 (DSTD) lines the spermidine pocket. P165 contributes to the S-methyl-5'-thioadenosine binding site.

This sequence belongs to the spermidine/spermine synthase family. In terms of assembly, homodimer or homotetramer.

Its subcellular location is the cytoplasm. The catalysed reaction is S-adenosyl 3-(methylsulfanyl)propylamine + putrescine = S-methyl-5'-thioadenosine + spermidine + H(+). It participates in amine and polyamine biosynthesis; spermidine biosynthesis; spermidine from putrescine: step 1/1. In terms of biological role, catalyzes the irreversible transfer of a propylamine group from the amino donor S-adenosylmethioninamine (decarboxy-AdoMet) to putrescine (1,4-diaminobutane) to yield spermidine. In Caldicellulosiruptor bescii (strain ATCC BAA-1888 / DSM 6725 / KCTC 15123 / Z-1320) (Anaerocellum thermophilum), this protein is Polyamine aminopropyltransferase.